The chain runs to 342 residues: MTTMEQRRNQNAVQQQDDEETQHGPFPVEQLQAAGIASVDVKKLRDAGLCTVEGVAYTPRKDLLQIKGISDAKVDKIVEAASKLVPLGFTSASQLHAQRQEIIQITSGSRELDKVLEGGIETGSITELYGEFRSGKTQLCHTLCVTCQLPMDQGGGEGKAMYIDAEGTFRPQRLLQIADRFGLNGADVLENVAYARAYNTDHQSRLLLEAASMMIETRFALLIVDSATALYRTDFSGRGELSARQMHLAKFLRSLQKLADEFGVAVVITNQVVAQVDGSALFAGPQFKPIGGNIMAHATTTRLALRKGRAEERICKVISSPCLPEAEARFQISTEGVTDCKD.

The interval 1–24 is disordered; the sequence is MTTMEQRRNQNAVQQQDDEETQHG. The region spanning 51-80 is the HhH domain; that stretch reads TVEGVAYTPRKDLLQIKGISDAKVDKIVEA. Positions 100–314 constitute a FtsK domain; the sequence is QEIIQITSGS…LRKGRAEERI (215 aa). 130 to 137 is a binding site for ATP; that stretch reads GEFRSGKT.

It belongs to the RecA family. RAD51 subfamily. As to quaternary structure, self-associates and interacts with XRCC3. Binds to RAD54/CHR25. Interacts with BRCA2A and BRCA2B. Can form a tripartite complex with both BRCA2B and DSS1(I). As to expression, detected in various tissues. Higher expression in reproductive tissues than in vegetative tissues, with the highest expression level in young flower buds. At cellular level, is expressed at low levels in flower primordia, then at higher levels in young anthers and at highest levels in both females and males meiocytes. Not detected in gametophytes.

The protein resides in the nucleus. Functionally, binds to single and double-stranded DNA and exhibits DNA-dependent ATPase activity. Unwinds duplex DNA. Component of the meiotic recombination pathway. Seems to play a role in mediating chromosome homology search, chromosome pairing and synapsis at early stages and probably chromosome crossing-over at later stages in meiosis. Probably is involved in the repair of meiotic double strand breaks (DBSs) generated by AtSPO11-1 and in homologous recombination. Its function is dispensable for vegetative growth and root mitosis. This Arabidopsis thaliana (Mouse-ear cress) protein is DNA repair protein RAD51 homolog 1.